The following is a 157-amino-acid chain: Protein Smg homolog (157 aa).

It belongs to the Smg family.

In Aeromonas hydrophila subsp. hydrophila (strain ATCC 7966 / DSM 30187 / BCRC 13018 / CCUG 14551 / JCM 1027 / KCTC 2358 / NCIMB 9240 / NCTC 8049), this protein is Protein Smg homolog.